A 1066-amino-acid polypeptide reads, in one-letter code: DNA-directed RNA polymerase subunit beta (1066 aa).

Belongs to the RNA polymerase beta chain family. In plastids the minimal PEP RNA polymerase catalytic core is composed of four subunits: alpha, beta, beta', and beta''. When a (nuclear-encoded) sigma factor is associated with the core the holoenzyme is formed, which can initiate transcription.

The protein localises to the plastid. The protein resides in the chloroplast. The enzyme catalyses RNA(n) + a ribonucleoside 5'-triphosphate = RNA(n+1) + diphosphate. DNA-dependent RNA polymerase catalyzes the transcription of DNA into RNA using the four ribonucleoside triphosphates as substrates. The protein is DNA-directed RNA polymerase subunit beta of Coffea arabica (Arabian coffee).